Reading from the N-terminus, the 86-residue chain is UPF0297 protein CA_C1679 (86 aa).

Belongs to the UPF0297 family.

The sequence is that of UPF0297 protein CA_C1679 from Clostridium acetobutylicum (strain ATCC 824 / DSM 792 / JCM 1419 / IAM 19013 / LMG 5710 / NBRC 13948 / NRRL B-527 / VKM B-1787 / 2291 / W).